A 131-amino-acid polypeptide reads, in one-letter code: Fumarate reductase subunit C (131 aa).

The next 3 helical transmembrane spans lie at 30 to 50 (EGTA…LFAL), 57 to 77 (WMGF…LITL), and 109 to 129 (IIKG…YVAL).

This sequence belongs to the FrdC family. As to quaternary structure, part of an enzyme complex containing four subunits: a flavoprotein (FrdA), an iron-sulfur protein (FrdB), and two hydrophobic anchor proteins (FrdC and FrdD).

It is found in the cell inner membrane. Functionally, two distinct, membrane-bound, FAD-containing enzymes are responsible for the catalysis of fumarate and succinate interconversion; fumarate reductase is used in anaerobic growth, and succinate dehydrogenase is used in aerobic growth. Anchors the catalytic components of the fumarate reductase complex to the cell inner membrane, binds quinones. The chain is Fumarate reductase subunit C from Salmonella heidelberg (strain SL476).